A 351-amino-acid polypeptide reads, in one-letter code: Beta-hexosaminidase (351 aa).

Substrate contacts are provided by residues Asp-62, Arg-70, Arg-133, and 163 to 164 (KH). His-176 functions as the Proton donor/acceptor in the catalytic mechanism. Asp-248 (nucleophile) is an active-site residue.

It belongs to the glycosyl hydrolase 3 family. NagZ subfamily. As to quaternary structure, monomer.

It is found in the cytoplasm. It catalyses the reaction Hydrolysis of terminal non-reducing N-acetyl-D-hexosamine residues in N-acetyl-beta-D-hexosaminides.. It functions in the pathway cell wall biogenesis; peptidoglycan recycling. In terms of biological role, plays a role in peptidoglycan recycling by cleaving the terminal beta-1,4-linked N-acetylglucosamine (GlcNAc) from peptide-linked peptidoglycan fragments, giving rise to free GlcNAc, anhydro-N-acetylmuramic acid and anhydro-N-acetylmuramic acid-linked peptides. This is Beta-hexosaminidase from Haemophilus influenzae (strain ATCC 51907 / DSM 11121 / KW20 / Rd).